A 247-amino-acid polypeptide reads, in one-letter code: Triosephosphate isomerase (247 aa).

Residues Asn-10 and Lys-12 each contribute to the substrate site. His-94 (electrophile) is an active-site residue. The active-site Proton acceptor is Glu-164.

The protein belongs to the triosephosphate isomerase family. Homodimer.

It is found in the cytoplasm. The catalysed reaction is D-glyceraldehyde 3-phosphate = dihydroxyacetone phosphate. It catalyses the reaction dihydroxyacetone phosphate = methylglyoxal + phosphate. It functions in the pathway carbohydrate biosynthesis; gluconeogenesis. The protein operates within carbohydrate degradation; glycolysis; D-glyceraldehyde 3-phosphate from glycerone phosphate: step 1/1. In terms of biological role, triosephosphate isomerase is an extremely efficient metabolic enzyme that catalyzes the interconversion between dihydroxyacetone phosphate (DHAP) and D-glyceraldehyde-3-phosphate (G3P) in glycolysis and gluconeogenesis. Its function is as follows. It is also responsible for the non-negligible production of methylglyoxal a reactive cytotoxic side-product that modifies and can alter proteins, DNA and lipids. This chain is Triosephosphate isomerase (tpi-1), found in Caenorhabditis elegans.